The chain runs to 74 residues: U3-agatoxin-Ao1f (74 aa).

An N-terminal signal peptide occupies residues 1–20 (MRAIISLLLISTMVFGVIEA). Positions 21–34 (VSLEEGLKIFEGER) are excised as a propeptide. Cystine bridges form between cysteine 37–cysteine 53, cysteine 44–cysteine 58, cysteine 52–cysteine 68, and cysteine 60–cysteine 66. Residue asparagine 72 is modified to Asparagine amide.

Belongs to the neurotoxin 07 (Beta/delta-agtx) family. 03 (aga-4) subfamily. Aga sub-subfamily. Expressed by the venom gland.

It localises to the secreted. In terms of biological role, insecticidal neurotoxin that modulates the insect Nav channel (DmNaV1/tipE (para/tipE)) in a unique manner, with both the activation and inactivation processes being affected. The voltage dependence of activation is shifted toward more hyperpolarized potentials (analogous to site 4 toxins) and a non-inactivating persistent sodium current is induced (site 3-like action). Interestingly, both effects take place in a voltage-dependent manner, producing a bell-shaped curve between -80 and 0 mV. In vivo, induces an irreversible spastic paralysis when injected into insects. The chain is U3-agatoxin-Ao1f from Agelena orientalis (Funnel-web spider).